The chain runs to 408 residues: Peptidase T-like protein RB0614 (408 aa).

Histidine 80 contributes to the Zn(2+) binding site. The active site involves aspartate 82. Position 142 (aspartate 142) interacts with Zn(2+). Glutamate 174 acts as the Proton acceptor in catalysis. Residues glutamate 175, aspartate 198, and histidine 380 each contribute to the Zn(2+) site.

Belongs to the peptidase M20B family. Zn(2+) serves as cofactor.

In Rhizobium meliloti (strain 1021) (Ensifer meliloti), this protein is Peptidase T-like protein RB0614.